The primary structure comprises 439 residues: Methylenetetrahydrofolate--tRNA-(uracil-5-)-methyltransferase TrmFO (439 aa).

Residue 9-14 (GAGLAG) participates in FAD binding.

It belongs to the MnmG family. TrmFO subfamily. The cofactor is FAD.

It is found in the cytoplasm. The enzyme catalyses uridine(54) in tRNA + (6R)-5,10-methylene-5,6,7,8-tetrahydrofolate + NADH + H(+) = 5-methyluridine(54) in tRNA + (6S)-5,6,7,8-tetrahydrofolate + NAD(+). It carries out the reaction uridine(54) in tRNA + (6R)-5,10-methylene-5,6,7,8-tetrahydrofolate + NADPH + H(+) = 5-methyluridine(54) in tRNA + (6S)-5,6,7,8-tetrahydrofolate + NADP(+). Catalyzes the folate-dependent formation of 5-methyl-uridine at position 54 (M-5-U54) in all tRNAs. This is Methylenetetrahydrofolate--tRNA-(uracil-5-)-methyltransferase TrmFO from Lactobacillus delbrueckii subsp. bulgaricus (strain ATCC BAA-365 / Lb-18).